The chain runs to 441 residues: Protein FAM83A (441 aa).

Disordered stretches follow at residues 81-108 and 312-368; these read SNDN…MNSD and GMSI…SPLQ. Positions 314-327 are enriched in polar residues; the sequence is SIMSDSNPESINTT. A compositionally biased stretch (low complexity) spans 328 to 354; that stretch reads SEPFSSISTASISNDSQRPKSPVSTTP.

It belongs to the FAM83 family.

The protein resides in the cytoplasm. In terms of biological role, may function in the epidermal growth factor receptor/EGFR signaling pathway. The sequence is that of Protein FAM83A from Xenopus tropicalis (Western clawed frog).